The sequence spans 177 residues: Plasmid transfer protein TraF (177 aa).

The signal sequence occupies residues 1–30 (MSRFQRLTKYVAIGGGAALLLAGAAYLAGA).

The protein belongs to the peptidase S26C family.

It localises to the periplasm. Functionally, required for donor-specific phage sensitivity. May be involved in pilus assembly. The sequence is that of Plasmid transfer protein TraF (traF) from Escherichia coli.